Consider the following 301-residue polypeptide: Coiled-coil domain-containing protein 69-B (301 aa).

Residues Met1–Glu43 are disordered. A lipid anchor (N-myristoyl glycine) is attached at Gly2. Over residues Pro26–Pro41 the composition is skewed to polar residues. Coiled-coil stretches lie at residues Asn42–Ser167 and Lys213–Arg281.

It belongs to the CCDC69 family.

Its subcellular location is the cytoplasm. It localises to the cytoskeleton. The protein resides in the spindle. The protein localises to the midbody. In terms of biological role, may act as a scaffold to regulate the recruitment and assembly of spindle midzone components. The protein is Coiled-coil domain-containing protein 69-B (ccdc69-b) of Xenopus laevis (African clawed frog).